The sequence spans 651 residues: Acetyl-coenzyme A synthetase (651 aa).

Residues 189–192 (RGGK), Thr311, and Asn335 each bind CoA. ATP is bound by residues 387-389 (GEP), 411-416 (DTWWQT), Asp500, and Arg515. Ser523 serves as a coordination point for CoA. Arg526 is a binding site for ATP. Mg(2+)-binding residues include Val537, His539, and Val542. Residue Arg586 coordinates CoA. An N6-acetyllysine modification is found at Lys611.

This sequence belongs to the ATP-dependent AMP-binding enzyme family. It depends on Mg(2+) as a cofactor. Post-translationally, acetylated. Deacetylation by the SIR2-homolog deacetylase activates the enzyme.

The enzyme catalyses acetate + ATP + CoA = acetyl-CoA + AMP + diphosphate. Its function is as follows. Catalyzes the conversion of acetate into acetyl-CoA (AcCoA), an essential intermediate at the junction of anabolic and catabolic pathways. AcsA undergoes a two-step reaction. In the first half reaction, AcsA combines acetate with ATP to form acetyl-adenylate (AcAMP) intermediate. In the second half reaction, it can then transfer the acetyl group from AcAMP to the sulfhydryl group of CoA, forming the product AcCoA. The chain is Acetyl-coenzyme A synthetase from Brucella melitensis biotype 1 (strain ATCC 23456 / CCUG 17765 / NCTC 10094 / 16M).